Here is a 277-residue protein sequence, read N- to C-terminus: Transcription factor HES-4-B (277 aa).

The interval 1 to 44 is disordered; the sequence is MPADSMEKPTASPIAGAPANSAQTPDKPKSASEHRKSSKPIMEK. Residues 26 to 35 show a composition bias toward basic and acidic residues; that stretch reads DKPKSASEHR. Residues 34 to 91 enclose the bHLH domain; it reads HRKSSKPIMEKRRRARINESLGQLKTLILDALKKDSSRHSKLEKADILEMTVKHLRNL. The Orange domain occupies 110 to 143; the sequence is YRAGFNECMNEVTRFLSTCEGVNTEVRTRLLGHL. Residues 258 to 277 form a disordered region; the sequence is VSPLGGSTRADSAESVWRPW. The WRPW motif motif lies at 274–277; that stretch reads WRPW.

In terms of assembly, transcription repression requires formation of a complex with a corepressor protein of the Groucho/TLE family. Interacts with the bHLH protein hes6; this interaction may inhibit the transcriptional repressor activity. Binds DNA in the form of a heterodimer with the bHLH protein hey1/hrt1. Interacts (via Orange domain) with id3 (via HLH domain). Dynamically expressed in the borders of several tissue territories. Expressed in the pre-placodal ectoderm (PPE) from gastrula stage. During gastrulation, expressed in the deep layer of the dorsal lip, the Spemann organizer and three distinct regions in the prospective neuroectoderm: neural plate border, presumptive floor plate/notoplate and anterior neural plate. At later stages, expression is localized to the anterior of the prechordal plate, the presomitic mesoderm, neural tube, neural crest derivatives and several tissues of the central nervous system, with expression in the developing floor plate continues to at least the tadpole stage. From the early tailbud stage, expressed in the dorsoanterior region of the developing pronephros. During early tailbud stages, broadly expressed within the pronephric mesoderm. and in the sensorial layer of the ectoderm covering the pronephros anlagen. During late tailbud to early tadpole stages, expressed in the ventral region of the pronephros. Expression remains in the proximal and distal tubules at late tadpole stages (stage 35).

The protein resides in the nucleus. Its function is as follows. Transcriptional repressor. Binds DNA on N-box motifs: 5'-CACNAG-3'. Promotes floor plate development and prechordal plate development. Required for lens development as early as the stage of lens field formation, partly through regulation of gene expression of the cell cycle inhibitor cdknx/p27(xic1). Required for formation of the neural crest downstream of multiple signaling pathways, and acts at the neural plate border via both DNA-binding dependent and independent mechanisms; acts in a DNA-binding dependent manner to repress pro-apoptotic and neural crest differentiation genes, including id3, delta1, and cdknx/p27(xic1), and thus promote the cell survival of neural plate border cells and maintain them in an undifferentiated state. Represses transcription of id3, at least in part through the repression of bmp4. On the other hand, acts in a DNA-independent manner separate from the transcriptional repressor function, to stimulate cell proliferation and promote neural crest formation. Via this DNA-independent route, acts in neurulae upstream of stat3 to transiently up-regulate the notch ligand dll1/delta1, which in turn up-regulates id3 expression. Then interacts directly with id3, which blocks the transcriptional repressor function of hes4-B/hairy2b to allow the progression of neural crest progenitors through specification and differentiation. Also acts via repressor-dependent and repressor-independent mechanisms in early gastrulae to establish the prospective anterior prechordal mesoderm identity in the Spemann organizer; induces specific genes independently from direct transcriptional regulation, and represses the genes specific for neighboring tissues through direct transcriptional repression. Modulates lateral inhibition during notch signaling and regulates the cell context dependent effects of notch (which can have inhibitory, permissive or enhancing roles in muscle or neural differentiation). Inhibits myogenesis. The polypeptide is Transcription factor HES-4-B (hes4-b) (Xenopus laevis (African clawed frog)).